Reading from the N-terminus, the 598-residue chain is Aspartate--tRNA(Asp/Asn) ligase (598 aa).

Glu174 contacts L-aspartate. Positions 198 to 201 (QQLK) are aspartate. Arg220 contacts L-aspartate. ATP is bound by residues 220–222 (RDE) and Gln229. L-aspartate is bound at residue His458. Glu492 contacts ATP. Arg499 provides a ligand contact to L-aspartate. 544–547 (GIDR) lines the ATP pocket.

This sequence belongs to the class-II aminoacyl-tRNA synthetase family. Type 1 subfamily. Homodimer.

It is found in the cytoplasm. The catalysed reaction is tRNA(Asx) + L-aspartate + ATP = L-aspartyl-tRNA(Asx) + AMP + diphosphate. In terms of biological role, aspartyl-tRNA synthetase with relaxed tRNA specificity since it is able to aspartylate not only its cognate tRNA(Asp) but also tRNA(Asn). Reaction proceeds in two steps: L-aspartate is first activated by ATP to form Asp-AMP and then transferred to the acceptor end of tRNA(Asp/Asn). This is Aspartate--tRNA(Asp/Asn) ligase from Dehalococcoides mccartyi (strain ATCC BAA-2266 / KCTC 15142 / 195) (Dehalococcoides ethenogenes (strain 195)).